The sequence spans 411 residues: Stearoyl-[acyl-carrier-protein] 9-desaturase 2, chloroplastic (411 aa).

The N-terminal 44 residues, 1 to 44, are a transit peptide targeting the chloroplast; that stretch reads MALLLNSTITVAMKQNPLVAVSFPRTTCLGSSFSPPRLLRVSCV. Fe cation-binding residues include Glu-148, Glu-186, His-189, Glu-239, Glu-272, and His-275.

It belongs to the fatty acid desaturase type 2 family. As to quaternary structure, homodimer. Requires Fe(2+) as cofactor. Preferentially expressed in roots and flowers.

Its subcellular location is the plastid. The protein resides in the chloroplast. The enzyme catalyses octadecanoyl-[ACP] + 2 reduced [2Fe-2S]-[ferredoxin] + O2 + 2 H(+) = (9Z)-octadecenoyl-[ACP] + 2 oxidized [2Fe-2S]-[ferredoxin] + 2 H2O. It participates in lipid metabolism; fatty acid metabolism. Functionally, converts stearoyl-ACP to oleoyl-ACP by introduction of a cis double bond between carbons 9 and 10 of the acyl chain. Exhibits delta-9 palmitoyl-[acyl-carrier-protein] desaturase (PAD) activity. Involved in omega-7 monounsaturated fatty acid biosynthesis, especially in the endosperm oil. This Arabidopsis thaliana (Mouse-ear cress) protein is Stearoyl-[acyl-carrier-protein] 9-desaturase 2, chloroplastic (S-ACP-DES2).